The sequence spans 1054 residues: Calcium-transporting ATPase 2, endoplasmic reticulum-type (1054 aa).

The Cytoplasmic portion of the chain corresponds to 1-53 (MEEEKSFSAWSWSVEQCLKEYKTRLDKGLTSEDVQIRRQKYGFNELAKEKGKP). Residues 54–74 (LWHLVLEQFDDTLVKILLGAA) form a helical membrane-spanning segment. At 75 to 98 (FISFVLAFLGEEHGSGSGFEAFVE) the chain is on the lumenal side. Residues 99-118 (PFVIVLILILNAVVGVWQES) traverse the membrane as a helical segment. Over 119–262 (NAEKALEALK…ESETPLKKKL (144 aa)) the chain is Cytoplasmic. A helical transmembrane segment spans residues 263 to 282 (DEFGSRLTTAICIVCVLVWM). At 283–312 (INYKNFVSWDVVDGYKPVNIKFSFEKCTYY) the chain is on the lumenal side. The helical transmembrane segment at 313 to 330 (FKIAVALAVAAIPEGLPA) threads the bilayer. Ca(2+) is bound by residues V321, A322, I324, and E326. Over 331–782 (VITTCLALGT…AEGRSIYNNM (452 aa)) the chain is Cytoplasmic. The 4-aspartylphosphate intermediate role is filled by D368. 2 residues coordinate Mg(2+): D727 and D731. A helical membrane pass occupies residues 783-802 (KAFIRYMISSNVGEVISIFL). Ca(2+) contacts are provided by N793 and E796. Residues 803–812 (TAALGIPECM) are Lumenal-facing. Residues 813-833 (IPVQLLWVNLVTDGPPATALG) traverse the membrane as a helical segment. Residues N821, T824, and D825 each coordinate Ca(2+). At 834-853 (FNPADIDIMKKPPRKSDDCL) the chain is on the cytoplasmic side. Residues 854-876 (IDSWVLIRYLVIGSYVGVATVGI) form a helical membrane-spanning segment. Topologically, residues 877 to 949 (FVLWYTQASF…YFTLGKVKPM (73 aa)) are lumenal. Residues 950-969 (TLSLTVLVAIEMFNSLNALS) traverse the membrane as a helical segment. Residue E960 coordinates Ca(2+). Residues 970–982 (EDNSLLTMPPWRN) are Cytoplasmic-facing. The chain crosses the membrane as a helical span at residues 983 to 1001 (PWLLVAMTVSFALHCVILY). The Lumenal portion of the chain corresponds to 1002-1016 (VPFLANVFGIVPLSF). Residues 1017–1037 (REWFVVILVSFPVILIDEALK) form a helical membrane-spanning segment. At 1038–1054 (FIGRCRRTRIKKKIKTM) the chain is on the cytoplasmic side.

This sequence belongs to the cation transport ATPase (P-type) (TC 3.A.3) family. Type IIA subfamily.

Its subcellular location is the membrane. The catalysed reaction is Ca(2+)(in) + ATP + H2O = Ca(2+)(out) + ADP + phosphate + H(+). In terms of biological role, this magnesium-dependent enzyme catalyzes the hydrolysis of ATP coupled with the translocation of calcium from the cytosol to an endomembrane compartment. This Arabidopsis thaliana (Mouse-ear cress) protein is Calcium-transporting ATPase 2, endoplasmic reticulum-type (ECA2).